The primary structure comprises 110 residues: Insulin-1 (110 aa).

The signal sequence occupies residues 1 to 24 (MALWMRFLPLLALLVLWEPKPAQA). 3 disulfides stabilise this stretch: Cys31–Cys96, Cys43–Cys109, and Cys95–Cys100. A propeptide spans 57–87 (EVEDPQVPQLELGGGPEAGDLQTLALEVARQ) (c peptide).

This sequence belongs to the insulin family. In terms of assembly, heterodimer of a B chain and an A chain linked by two disulfide bonds.

The protein localises to the secreted. Its function is as follows. Insulin decreases blood glucose concentration. It increases cell permeability to monosaccharides, amino acids and fatty acids. It accelerates glycolysis, the pentose phosphate cycle, and glycogen synthesis in liver. This is Insulin-1 (Ins1) from Rattus norvegicus (Rat).